A 117-amino-acid polypeptide reads, in one-letter code: Large ribosomal subunit protein bL19 (117 aa).

It belongs to the bacterial ribosomal protein bL19 family.

This protein is located at the 30S-50S ribosomal subunit interface and may play a role in the structure and function of the aminoacyl-tRNA binding site. In Shewanella amazonensis (strain ATCC BAA-1098 / SB2B), this protein is Large ribosomal subunit protein bL19.